The sequence spans 574 residues: Proline--tRNA ligase (574 aa).

The protein belongs to the class-II aminoacyl-tRNA synthetase family. ProS type 1 subfamily. As to quaternary structure, homodimer.

It localises to the cytoplasm. The enzyme catalyses tRNA(Pro) + L-proline + ATP = L-prolyl-tRNA(Pro) + AMP + diphosphate. In terms of biological role, catalyzes the attachment of proline to tRNA(Pro) in a two-step reaction: proline is first activated by ATP to form Pro-AMP and then transferred to the acceptor end of tRNA(Pro). As ProRS can inadvertently accommodate and process non-cognate amino acids such as alanine and cysteine, to avoid such errors it has two additional distinct editing activities against alanine. One activity is designated as 'pretransfer' editing and involves the tRNA(Pro)-independent hydrolysis of activated Ala-AMP. The other activity is designated 'posttransfer' editing and involves deacylation of mischarged Ala-tRNA(Pro). The misacylated Cys-tRNA(Pro) is not edited by ProRS. The polypeptide is Proline--tRNA ligase (Buchnera aphidicola subsp. Baizongia pistaciae (strain Bp)).